Consider the following 146-residue polypeptide: UPF0306 protein HD_1359 (146 aa).

This sequence belongs to the UPF0306 family.

The sequence is that of UPF0306 protein HD_1359 from Haemophilus ducreyi (strain 35000HP / ATCC 700724).